A 52-amino-acid chain; its full sequence is Rubredoxin (52 aa).

Residues 1–52 enclose the Rubredoxin-like domain; that stretch reads MEKWQCTVCGYIYDPEVGDPTQNIPPGTKFEDLPDDWVCPDCGVGKDQFEKI. 4 residues coordinate Fe cation: cysteine 6, cysteine 9, cysteine 39, and cysteine 42.

This sequence belongs to the rubredoxin family. Fe(3+) serves as cofactor.

Functionally, rubredoxin is a small nonheme, iron protein lacking acid-labile sulfide. Its single Fe, chelated to 4 Cys, functions as an electron acceptor and may also stabilize the conformation of the molecule. In Thermoanaerobacterium thermosaccharolyticum (strain ATCC 7956 / DSM 571 / NCIMB 9385 / NCA 3814 / NCTC 13789 / WDCM 00135 / 2032) (Clostridium thermosaccharolyticum), this protein is Rubredoxin.